We begin with the raw amino-acid sequence, 81 residues long: Sulfur carrier protein TusA (81 aa).

The Cysteine persulfide intermediate role is filled by cysteine 19.

It belongs to the sulfur carrier protein TusA family.

Its subcellular location is the cytoplasm. In terms of biological role, sulfur carrier protein which probably makes part of a sulfur-relay system. This is Sulfur carrier protein TusA from Shewanella oneidensis (strain ATCC 700550 / JCM 31522 / CIP 106686 / LMG 19005 / NCIMB 14063 / MR-1).